A 347-amino-acid polypeptide reads, in one-letter code: Microneme protein 21 (347 aa).

The protein localises to the cytoplasmic vesicle. Its subcellular location is the secretory vesicle. The protein resides in the microneme. It localises to the secreted. This is Microneme protein 21 from Toxoplasma gondii.